Here is a 186-residue protein sequence, read N- to C-terminus: Potassium-transporting ATPase KdpC subunit (186 aa).

A helical transmembrane segment spans residues A9–M29.

It belongs to the KdpC family. As to quaternary structure, the system is composed of three essential subunits: KdpA, KdpB and KdpC.

It is found in the cell membrane. In terms of biological role, part of the high-affinity ATP-driven potassium transport (or Kdp) system, which catalyzes the hydrolysis of ATP coupled with the electrogenic transport of potassium into the cytoplasm. This subunit acts as a catalytic chaperone that increases the ATP-binding affinity of the ATP-hydrolyzing subunit KdpB by the formation of a transient KdpB/KdpC/ATP ternary complex. This chain is Potassium-transporting ATPase KdpC subunit, found in Methanosphaerula palustris (strain ATCC BAA-1556 / DSM 19958 / E1-9c).